We begin with the raw amino-acid sequence, 556 residues long: Formate--tetrahydrofolate ligase (556 aa).

65-72 is an ATP binding site; sequence TPAGEGKS.

The protein belongs to the formate--tetrahydrofolate ligase family.

It carries out the reaction (6S)-5,6,7,8-tetrahydrofolate + formate + ATP = (6R)-10-formyltetrahydrofolate + ADP + phosphate. Its pathway is one-carbon metabolism; tetrahydrofolate interconversion. The polypeptide is Formate--tetrahydrofolate ligase (Enterococcus faecalis (strain ATCC 700802 / V583)).